The chain runs to 311 residues: Ribosomal RNA small subunit methyltransferase H (311 aa).

Residues 39-41 (GGH), Asp-59, Phe-81, Asp-102, and His-109 contribute to the S-adenosyl-L-methionine site.

This sequence belongs to the methyltransferase superfamily. RsmH family.

The protein localises to the cytoplasm. It carries out the reaction cytidine(1402) in 16S rRNA + S-adenosyl-L-methionine = N(4)-methylcytidine(1402) in 16S rRNA + S-adenosyl-L-homocysteine + H(+). Specifically methylates the N4 position of cytidine in position 1402 (C1402) of 16S rRNA. The chain is Ribosomal RNA small subunit methyltransferase H from Porphyromonas gingivalis (strain ATCC BAA-308 / W83).